Reading from the N-terminus, the 426-residue chain is LIM/homeobox protein Lhx2 (426 aa).

The span at 14–24 shows a compositional bias: basic and acidic residues; it reads VIDEMDRRQER. A disordered region spans residues 14–42; it reads VIDEMDRRQERGSGISSAIDRGDTETTMP. LIM zinc-binding domains follow at residues 52 to 104 and 114 to 167; these read CAGC…CKED and CARC…CRLH. Residues 248 to 268 form a disordered region; it reads DAEHLDRDQPYPSSQKTKRMR. The homeobox DNA-binding region spans 264-323; sequence TKRMRTSFKHHQLRTMKSYFAINHNPDAKDLKQLAQKTGLTKRVLQVWFQNARAKFRRNL. A Nuclear localization signal motif is present at residues 305 to 321; the sequence is KRVLQVWFQNARAKFRR. The segment covering 326–354 has biased composition (polar residues); sequence QENTGVDKTSDATLQTGTPSGPASELSNA. The tract at residues 326-370 is disordered; that stretch reads QENTGVDKTSDATLQTGTPSGPASELSNASLSPSSTPTTLTDLTS. Positions 355–370 are enriched in low complexity; sequence SLSPSSTPTTLTDLTS.

As to quaternary structure, interacts (via LIM domains) with CITED2. Interacts with POU4F2. In terms of tissue distribution, found in discrete regions of the developing CNS, primarily in diencephalic and telencephalic structures and a subset of lymphoid tissues. Also found in embryonic spinal cord and fetal liver.

Its subcellular location is the nucleus. Its function is as follows. Acts as a transcriptional activator. Stimulates the promoter of the alpha-glycoprotein gene. Transcriptional regulatory protein involved in the control of cell differentiation in developing lymphoid and neural cell types. This Rattus norvegicus (Rat) protein is LIM/homeobox protein Lhx2 (Lhx2).